Here is a 472-residue protein sequence, read N- to C-terminus: Divalent metal cation transporter MntH (472 aa).

11 helical membrane-spanning segments follow: residues 59–79, 92–112, 136–156, 167–187, 196–216, 233–253, 288–308, 325–345, 377–397, 402–422, and 439–459; these read LLAF…PGNW, MLLS…ALAA, LALW…EVIG, VPII…LLLM, AFVI…IVLA, VVAD…TVMP, LALM…AAVF, LLAP…ALLA, VLTR…YGEQ, LLLL…IPLL, and WLMV…VKLL.

It belongs to the NRAMP family.

Its subcellular location is the cell inner membrane. Its function is as follows. H(+)-stimulated, divalent metal cation uptake system. The chain is Divalent metal cation transporter MntH from Xylella fastidiosa (strain 9a5c).